Consider the following 236-residue polypeptide: Orotidine 5'-phosphate decarboxylase (236 aa).

Residues Asp-16, Lys-38, 65-74 (DLKYHDIPNT), Thr-124, Arg-185, Gln-194, Gly-214, and Arg-215 each bind substrate. Residue Lys-67 is the Proton donor of the active site.

Belongs to the OMP decarboxylase family. Type 1 subfamily. Homodimer.

It carries out the reaction orotidine 5'-phosphate + H(+) = UMP + CO2. It functions in the pathway pyrimidine metabolism; UMP biosynthesis via de novo pathway; UMP from orotate: step 2/2. Its function is as follows. Catalyzes the decarboxylation of orotidine 5'-monophosphate (OMP) to uridine 5'-monophosphate (UMP). This is Orotidine 5'-phosphate decarboxylase from Hydrogenovibrio crunogenus (strain DSM 25203 / XCL-2) (Thiomicrospira crunogena).